The following is a 460-amino-acid chain: Cysteine--tRNA ligase (460 aa).

Cys28 contributes to the Zn(2+) binding site. A 'HIGH' region motif is present at residues 30 to 40 (MTVYDYCHLGH). Zn(2+) contacts are provided by Cys209, His234, and Glu238. Positions 266–270 (KMSKS) match the 'KMSKS' region motif. Lys269 contacts ATP.

It belongs to the class-I aminoacyl-tRNA synthetase family. Monomer. Zn(2+) is required as a cofactor.

It localises to the cytoplasm. It catalyses the reaction tRNA(Cys) + L-cysteine + ATP = L-cysteinyl-tRNA(Cys) + AMP + diphosphate. This Pseudomonas putida (strain ATCC 47054 / DSM 6125 / CFBP 8728 / NCIMB 11950 / KT2440) protein is Cysteine--tRNA ligase.